A 686-amino-acid polypeptide reads, in one-letter code: Rhophilin-2 (686 aa).

The REM-1 domain maps to 26-100; that stretch reads NPLAQTGRSK…LEGLNISVGV (75 aa). Residues 46–66 are interaction with Rho; sequence QILKAVRMRTGAENLLKVATN. The 350-residue stretch at 111-460 folds into the BRO1 domain; that stretch reads PLIPLGLKET…RLTYAQHQEE (350 aa). The region spanning 515-593 is the PDZ domain; sequence RSIRFTAEEG…DEIEMKVVSL (79 aa). Thr-655 is modified (phosphothreonine).

Belongs to the RHPN family. Interacts with GTP-bound RhoA and RhoB. Interacts with both GTP- and GDP-bound RhoA. According to PubMed:12473120, it does not interact with RhoA. Interacts with KRT18. In terms of tissue distribution, widely expressed. Highly expressed in prostate, trachea, stomach, colon, thyroid and pancreas. Expressed at lower level in brain, spinal cord, kidney, placenta and liver.

It localises to the cytoplasm. The protein resides in the perinuclear region. In terms of biological role, binds specifically to GTP-Rho. May function in a Rho pathway to limit stress fiber formation and/or increase the turnover of F-actin structures in the absence of high levels of RhoA activity. The chain is Rhophilin-2 (RHPN2) from Homo sapiens (Human).